We begin with the raw amino-acid sequence, 101 residues long: Small ribosomal subunit protein uS14 (101 aa).

Belongs to the universal ribosomal protein uS14 family. Part of the 30S ribosomal subunit. Contacts proteins S3 and S10.

In terms of biological role, binds 16S rRNA, required for the assembly of 30S particles and may also be responsible for determining the conformation of the 16S rRNA at the A site. The protein is Small ribosomal subunit protein uS14 of Histophilus somni (strain 2336) (Haemophilus somnus).